Here is a 1734-residue protein sequence, read N- to C-terminus: Complement C4-A (1734 aa).

An N-terminal signal peptide occupies residues 1–19; it reads MRLLWGLAWVFSFCASSLQ. Cys66 and Cys95 are joined by a disulfide. Asn224 carries N-linked (GlcNAc...) asparagine glycosylation. Cys633 and Cys667 are joined by a disulfide. The propeptide occupies 674–677; the sequence is RQKR. Intrachain disulfides connect Cys700/Cys726, Cys701/Cys733, and Cys714/Cys734. The Anaphylatoxin-like domain maps to 700 to 734; that stretch reads CCQDGMTKLPMKRTCEQRAARVPQQACREPFLSCC. Asn743 and Asn859 each carry an N-linked (GlcNAc...) asparagine glycan. A cross-link (isoglutamyl cysteine thioester (Cys-Gln)) is located at residues 1002 to 1005; that stretch reads CAEQ. 2 N-linked (GlcNAc...) asparagine glycosylation sites follow: Asn1128 and Asn1383. Tyr1409 bears the Sulfotyrosine mark. Residues 1437 to 1443 constitute a propeptide that is removed on maturation; it reads RRSRRRR. 5 disulfides stabilise this stretch: Cys1461/Cys1525, Cys1573/Cys1578, Cys1585/Cys1663, Cys1608/Cys1732, and Cys1708/Cys1717. The region spanning 1585 to 1732 is the NTR domain; the sequence is CPRLLRSLER…FLMEFSSRGC (148 aa).

In absence of complement activation, circulates in blood as a disulfide-linked trimer of an alpha, beta and gamma chain. In terms of assembly, complement C4b is composed of Complement C4b-A, Complement C4 beta and Complement C4 gamma chains that are associated via disulfide bonds. Non-enzymatic component of the C3 convertase, also named C4bC2b, composed of the serine protease complement C2b (C2), as well as complement C4b. Non-enzymatic component of the C5 convertase, also named C4bC2bC3b, composed of the serine protease complement C2b (C2), complement C3b, as well as complement C4b. Post-translationally, prior to secretion, the single-chain precursor is enzymatically cleaved by plasminogen (PLG) to yield non-identical chains alpha, beta and gamma. During activation of the complement systems, the alpha chain is cleaved into C4a and C4b by different proteases depending on the complement pathway: C4b stays linked to the beta and gamma chains, while C4a is released in the plasma. The alpha chain is cleaved by C1S to generate C4a and C4b following activation by the classical complement system. The alpha chain is cleaved to generate C4a and C4b by MASP2 following activation by the lectin complement system. The alpha chain is cleaved by GZMK to generate C4a and C4b following activation by the GZMK complement system. Further degradation of C4b by C1 into the inactive fragments C4c and C4d blocks the generation of C3 convertase. The proteolytic cleavages often are incomplete so that many structural forms can be found in plasma. In terms of processing, upon activation, the internal thioester bond reacts with carbohydrate antigens on the target surface to form amide or ester bonds, leading to covalent association with the surface of pathogens. Complement C4b interacts with complement C3b via a thioester linkage. Post-translationally, N- and O-glycosylated. O-glycosylated with a core 1 or possibly core 8 glycan.

It localises to the secreted. The protein localises to the synapse. Its subcellular location is the cell projection. It is found in the axon. The protein resides in the dendrite. It localises to the cell surface. Its activity is regulated as follows. Specifically inhibited by nanobody hC4Nb8, inhibiting the classical complement pathway. Functionally, precursor of non-enzymatic components of the classical, lectin and GZMK complement pathways, which consist in a cascade of proteins that leads to phagocytosis and breakdown of pathogens and signaling that strengthens the adaptive immune system. Non-enzymatic component of C3 and C5 convertases. Generated following cleavage by complement proteases (C1S, MASP2 or GZMK, depending on the complement pathway), it covalently attaches to the surface of pathogens, where it acts as an opsonin that marks the surface of antigens for removal. It then recruits the serine protease complement C2b to form the C3 and C5 convertases, which cleave and activate C3 and C5, respectively, the next components of the complement pathways. Complement C4b-A isotype is responsible for effective binding to form amide bonds with immune aggregates or protein antigens, while complement C4b-B isotype catalyzes the transacylation of the thioester carbonyl group to form ester bonds with carbohydrate antigens. Its function is as follows. Putative humoral mediator released following cleavage by complement proteases (C1S, MASP2 or GZMK, depending on the complement pathway). While it is strongly similar to anaphylatoxins, its role is unclear. Was reported to act as a mediator of local inflammatory process; however these effects were probably due to contamination with C3a and/C5a anaphylatoxins in biological assays. The polypeptide is Complement C4-A (Mus musculus (Mouse)).